We begin with the raw amino-acid sequence, 399 residues long: UDP-galactopyranose mutase (399 aa).

Residues Ser-25, 44-45 (EK), Asn-52, and 71-72 (HI) contribute to the FAD site. Residues Ser-171, Trp-175, Tyr-200, Asn-297, Arg-306, and Tyr-345 each contribute to the UDP-alpha-D-galactose site. Arg-374 provides a ligand contact to FAD. Tyr-380 contacts UDP-alpha-D-galactose. 381–386 (IDMDRA) contacts FAD.

It belongs to the UDP-galactopyranose/dTDP-fucopyranose mutase family. It depends on FAD as a cofactor.

It catalyses the reaction UDP-alpha-D-galactose = UDP-alpha-D-galactofuranose. Its function is as follows. Involved in the conversion of UDP-GalP into UDP-GalF through a 2-keto intermediate. This Mycoplasma pneumoniae (strain ATCC 29342 / M129 / Subtype 1) (Mycoplasmoides pneumoniae) protein is UDP-galactopyranose mutase (glf).